Here is a 637-residue protein sequence, read N- to C-terminus: Nuclear receptor subfamily 2 group C member 1-A (637 aa).

A DNA-binding region (nuclear receptor) is located at residues 149-224 (VELCVVCGDK…LGMKQDSVQC (76 aa)). 2 consecutive NR C4-type zinc fingers follow at residues 152–172 (CVVC…CEGC) and 188–207 (CRGS…CQYC). One can recognise an NR LBD domain in the interval 383-624 (CLGSNANLLH…SIIPYILRME (242 aa)).

The protein belongs to the nuclear hormone receptor family. NR2 subfamily.

The protein resides in the nucleus. Functionally, orphan nuclear receptor. Binds the IR7 element in the promoter of its own gene in an autoregulatory negative feedback mechanism. Primarily repressor of a broad range of genes. Binds to hormone response elements (HREs) consisting of two 5'-AGGTCA-3' half site direct repeat consensus sequences. The sequence is that of Nuclear receptor subfamily 2 group C member 1-A (nr2c1-a) from Xenopus laevis (African clawed frog).